The sequence spans 726 residues: MSFCLTELHLWSLKSTLHIADRDIGVYQYYDKKDLPVSAAEHGNLEEKQRLAESRDYPWTLKNRRPEKLRDSLKELEELMQNSQCVLCQWKSKHICQLLFGSGVLVSLSLSGPQLEKVVIDRSLVGKLISDTISDALLTDSFIILSFLAQNKLCFIQFAKKMDSLDVNKRLEKLSALDYKISYHDIPGPATRTVDRHLAINSTQDLAVCWWPLLSDDAWPWTPIASEKDRANMLLLGFTQGGLEVLSSVRTEWNPLDVHFGTRQPYQVFTVECSFSVDQEPMADSCIYESVRNKLHCVSVTRIPLRSKAISCCKNSTEDKLIVGCEDSSVILYEAHRGVTLLAQAELMPSLISCHPSGAILLVGSNQGELQVFDIALSPINIQLLAEDCLPKETLQFNKFFDFSSSLVHMQWIAPPIVFQKPKRGEICDLLFLRFNRGPLGVLLFKLGVLRRGQLGLVDLIFQYIHCDEVYEAVSVLSSMNWDTLGQQCFISMSTIVNHLLRQRLTPEREAQLEASLGTFYAPARPLLDTTVLAYRDPVGTYARRLFHHLLRYQRFEKAFLLAVDIGARDLFMDIHYLALDMGELALAEVARRRADDIDVESVCSGVELLGPLDRRDMLNEGFAGSALTPEGGNPFPDLLPSSGSTPKHTIQQKIPNGPSNRRAIERKNEVMEETEEEEEEEEEAAACTDSSVATTWDAEGELREDHRRQDTEDVGSLRMVHFGLV.

WD repeat units follow at residues 305-343 (LRSK…TLLA) and 344-383 (QAEL…INIQ). A compositionally biased stretch (polar residues) spans 642–660 (SSGSTPKHTIQQKIPNGPS). A disordered region spans residues 642 to 717 (SSGSTPKHTI…RRQDTEDVGS (76 aa)). Positions 672 to 685 (MEETEEEEEEEEEA) are enriched in acidic residues. The segment covering 701–712 (GELREDHRRQDT) has biased composition (basic and acidic residues).

It belongs to the WD repeat fritz family. In terms of assembly, component of the CPLANE (ciliogenesis and planar polarity effectors) complex, composed of INTU, FUZ and WDPCP. Interacts with CPLANE1.

It is found in the cell membrane. The protein localises to the cytoplasm. Its subcellular location is the cytoskeleton. It localises to the cilium axoneme. The protein resides in the cilium basal body. In terms of biological role, probable effector of the planar cell polarity signaling pathway which regulates the septin cytoskeleton in both ciliogenesis and collective cell movements. Together with FUZ and WDPCP proposed to function as core component of the CPLANE (ciliogenesis and planar polarity effectors) complex involved in the recruitment of peripheral IFT-A proteins to basal bodies. Binds phosphatidylinositol 3-phosphate with highest affinity, followed by phosphatidylinositol 4-phosphate and phosphatidylinositol 5-phosphate. The chain is WD repeat-containing and planar cell polarity effector protein fritz homolog (Wdpcp) from Rattus norvegicus (Rat).